A 1130-amino-acid chain; its full sequence is BTB/POZ domain-containing protein 7 (1130 aa).

Polar residues predominate over residues 1 to 10 (MGANASNYPH). The interval 1-24 (MGANASNYPHSCSPRVGGNSQAQQ) is disordered. The N-myristoyl glycine moiety is linked to residue G2. BTB domains are found at residues 142–211 (TDVD…GMED) and 247–341 (YDVV…DLSV). The BACK domain maps to 413-479 (YGSKWVHRQA…WGEHQLMKRI (67 aa)). A Phosphoserine modification is found at S722. Disordered stretches follow at residues 898-1050 (SEAG…PAHV) and 1062-1130 (FGLT…KSAL). 2 stretches are compositionally biased toward basic and acidic residues: residues 923-935 (PTLEQKADGRENQ) and 996-1005 (KKQEDPRREY). S1008 carries the phosphoserine modification. Residues 1063 to 1075 (GLTSNRPPSHSAC) show a composition bias toward polar residues. Basic and acidic residues-rich tracts occupy residues 1080 to 1090 (LEERSSRRLTD) and 1101 to 1112 (RNADLERGDSIS).

In terms of tissue distribution, specifically expressed in embryonic epithelia.

It is found in the nucleus. Functionally, acts as a mediator of epithelial dynamics and organ branching by promoting cleft progression. Induced following accumulation of fibronectin in forming clefts, leading to local expression of the cell-scattering SNAIL2 and suppression of E-cadherin levels, thereby altering cell morphology and reducing cell-cell adhesion. This stimulates cell separation at the base of forming clefts by local, dynamic intercellular gap formation and promotes cleft progression. The polypeptide is BTB/POZ domain-containing protein 7 (Btbd7) (Mus musculus (Mouse)).